Consider the following 299-residue polypeptide: Cathepsin B-like CP3 (299 aa).

A signal peptide spans M1–S19. 3 disulfides stabilise this stretch: C87/C114, C97/C140, and C133/C176. C100 is an active-site residue. Active-site residues include H244 and N265.

This sequence belongs to the peptidase C1 family.

Its subcellular location is the vacuole. Functionally, thiol protease which is required for parasite excystation and invasion of the proximal small intestine of the human host. This Giardia intestinalis (Giardia lamblia) protein is Cathepsin B-like CP3 (CP3).